The primary structure comprises 217 residues: Elongation factor Ts (217 aa).

Residues 81-84 (TDFV) form an involved in Mg(2+) ion dislocation from EF-Tu region.

It belongs to the EF-Ts family.

It localises to the cytoplasm. Functionally, associates with the EF-Tu.GDP complex and induces the exchange of GDP to GTP. It remains bound to the aminoacyl-tRNA.EF-Tu.GTP complex up to the GTP hydrolysis stage on the ribosome. In Myxococcus xanthus (strain DK1622), this protein is Elongation factor Ts.